A 1059-amino-acid polypeptide reads, in one-letter code: MIKISDEKTWQSSRDSVYEVGDSYSGQNANRPLVATNCSEYAVAHANCQLRPVRRFAEVSLLPDILETMRNLGLNRLLRLQSYTWPHLAGGSGHGAMIVGSPASGRTFAYIPPVCHAVSRALMDFTGQCEDVEHDISQPDRYGPIALILVPDLRRVHQVSAMCLALLRKAHKNDSVTLALNVSSTKSSQFFLKLLNGVGCLVATPAQLVWFWQEAPGLMRFPCLQFLVYDDVDLMSREQLQDVQQVLQEILPLSHSPQVVMVSKSYCHTLMSKLRAVNDKPALVFGDILEAALYGGTRIRISIMRSEAKANAVVQMLQQCSPEEFRTVIFCSDDGDMQCLVAALEVQHYSCLPYYQTADLEVRQQVHSWQARSNGVILLCTDNCPELDIRDAHTIIHHSMSHSWSKFKLRHLKISDNLCNMVKPTASIVKKPLYSLVLLDDNNHRQLPRLVDFLQLHQKVDHRLVEVAKRIRQELGKARNDQHQLCDQILVLGKCYDPVCESRHRLSHIDRRPDYLPASGDVKVQLVKVYSPTHFCVRLLEHLPPKGTWRMMEYSAVQEFRMQLTQIKEPRRYWPPVAGAICMYHTTFTKERVRVLKVAAIKNTNIVQSDLTVKLQALDVDTRIFSTNCGKLFECPEALQQEAPLACDLRLPGWVPYFGERSWTEENIRNVNLILTQLPKDHFLQAKILFVAAGTLFVQDLVAIMYADQFKAHVRHLSLARRLVEATLVKRSENAAEMIREFFAEVIIEDDIDENVQDSKEKANSKPHEKMKGKMTDQPAKLQSQPPLSGRCLRLANMAHESVKENQLHQELQERRYETPEIPHQSNESDIPQSNEDRFSQLYECIMNCASLQLEDESKPAKHPDHVLSESVEFHKIMTNEDATPDHTQEKTALLLLPNNVARPSVTYYQTMTTLEFQVFLPEDDHDYKALLLGAQLFFRAISKSSDLILQFIMTLRFPYSSMSHNIRGRTVYISVKKLLALIDPLAFREYRFLKPNHDLFDKVDKQLQETQNRLVRFLEDMNYVKRNFEGQEKRETSEDEEVNVEGIERPDCHKIWDL.

The short motif at 54-82 (RRFAEVSLLPDILETMRNLGLNRLLRLQS) is the Q motif element. A Helicase ATP-binding domain is found at 87 to 284 (HLAGGSGHGA…RAVNDKPALV (198 aa)). Residue 100-107 (GSPASGRT) participates in ATP binding. Residues 230-233 (DDVD) carry the DEAD box motif. The region spanning 575–639 (PPVAGAICMY…GKLFECPEAL (65 aa)) is the Tudor domain. The segment at 756 to 787 (VQDSKEKANSKPHEKMKGKMTDQPAKLQSQPP) is disordered. Positions 757–775 (QDSKEKANSKPHEKMKGKM) are enriched in basic and acidic residues.

The protein resides in the cytoplasm. The enzyme catalyses ATP + H2O = ADP + phosphate + H(+). Involved in primary piRNA biogenesis in germline cells. The polypeptide is Putative ATP-dependent RNA helicase BoYb (BoYb) (Drosophila melanogaster (Fruit fly)).